Consider the following 342-residue polypeptide: Glycerol-3-phosphate dehydrogenase [NAD(P)+] (342 aa).

3 residues coordinate NADPH: Ser13, Trp14, and Lys108. Sn-glycerol 3-phosphate is bound by residues Lys108, Gly139, and Ser141. Ala143 lines the NADPH pocket. Lys194, Asp247, Ser257, Arg258, and Asn259 together coordinate sn-glycerol 3-phosphate. The Proton acceptor role is filled by Lys194. Arg258 serves as a coordination point for NADPH. Val282 and Glu284 together coordinate NADPH.

Belongs to the NAD-dependent glycerol-3-phosphate dehydrogenase family.

It localises to the cytoplasm. The enzyme catalyses sn-glycerol 3-phosphate + NAD(+) = dihydroxyacetone phosphate + NADH + H(+). It carries out the reaction sn-glycerol 3-phosphate + NADP(+) = dihydroxyacetone phosphate + NADPH + H(+). Its pathway is membrane lipid metabolism; glycerophospholipid metabolism. Its function is as follows. Catalyzes the reduction of the glycolytic intermediate dihydroxyacetone phosphate (DHAP) to sn-glycerol 3-phosphate (G3P), the key precursor for phospholipid synthesis. The chain is Glycerol-3-phosphate dehydrogenase [NAD(P)+] from Lactococcus lactis subsp. cremoris (strain MG1363).